Consider the following 297-residue polypeptide: Homoserine kinase (297 aa).

Position 82 to 92 (proline 82 to serine 92) interacts with ATP.

It belongs to the GHMP kinase family. Homoserine kinase subfamily.

It is found in the cytoplasm. It carries out the reaction L-homoserine + ATP = O-phospho-L-homoserine + ADP + H(+). Its pathway is amino-acid biosynthesis; L-threonine biosynthesis; L-threonine from L-aspartate: step 4/5. Catalyzes the ATP-dependent phosphorylation of L-homoserine to L-homoserine phosphate. The polypeptide is Homoserine kinase (Bacillus cereus (strain G9842)).